The chain runs to 379 residues: tRNA-specific 2-thiouridylase MnmA (379 aa).

ATP-binding positions include 23-30 (AMSGGVDS) and Leu49. Cys117 acts as the Nucleophile in catalysis. A disulfide bridge connects residues Cys117 and Cys214. Gly141 is a binding site for ATP. The interval 163-165 (RDQ) is interaction with tRNA. Catalysis depends on Cys214, which acts as the Cysteine persulfide intermediate.

This sequence belongs to the MnmA/TRMU family.

It localises to the cytoplasm. It carries out the reaction S-sulfanyl-L-cysteinyl-[protein] + uridine(34) in tRNA + AH2 + ATP = 2-thiouridine(34) in tRNA + L-cysteinyl-[protein] + A + AMP + diphosphate + H(+). Its function is as follows. Catalyzes the 2-thiolation of uridine at the wobble position (U34) of tRNA, leading to the formation of s(2)U34. The chain is tRNA-specific 2-thiouridylase MnmA from Cereibacter sphaeroides (strain ATCC 17029 / ATH 2.4.9) (Rhodobacter sphaeroides).